The sequence spans 113 residues: Protein USP1 (113 aa).

The N-terminal stretch at 1 to 18 (MKITMLFAALSAASGAFA) is a signal peptide. 6 tandem repeats follow at residues 32–37 (IGAGVG), 40–45 (IGAGVG), 46–49 (PYGY), 50–53 (PYGA), 59–65 (LQLLPLR), and 69–75 (LQWIPLR). The segment at 32 to 45 (IGAGVGIGIGAGVG) is 2 X 6 AA repeats. Residues 46–53 (PYGYPYGA) are 2 X 4 AA approximate tandem repeats. The 2 X 7 AA approximate repeats stretch occupies residues 59 to 75 (LQLLPLRWLSLQWIPLR).

The protein resides in the secreted. The polypeptide is Protein USP1 (USP1) (Puccinia graminis (Black stem rust fungus)).